The sequence spans 273 residues: uncharacterized protein (273 aa).

This is an uncharacterized protein from Methanocaldococcus jannaschii (strain ATCC 43067 / DSM 2661 / JAL-1 / JCM 10045 / NBRC 100440) (Methanococcus jannaschii).